We begin with the raw amino-acid sequence, 208 residues long: Large ribosomal subunit protein uL4 (208 aa).

This sequence belongs to the universal ribosomal protein uL4 family. In terms of assembly, part of the 50S ribosomal subunit.

In terms of biological role, one of the primary rRNA binding proteins, this protein initially binds near the 5'-end of the 23S rRNA. It is important during the early stages of 50S assembly. It makes multiple contacts with different domains of the 23S rRNA in the assembled 50S subunit and ribosome. Its function is as follows. Forms part of the polypeptide exit tunnel. The protein is Large ribosomal subunit protein uL4 of Solibacter usitatus (strain Ellin6076).